Here is a 396-residue protein sequence, read N- to C-terminus: MTINPVSRKVAWLRVVTLAIAAFIFNTTEFVPVGLLSDIAESFHMQTAQVGIMLTIYAWVVAVMSLPFMLLTSQMERRKLLICLFVLFIASHVLSFLAWNFTVLVISRIGIAFAHAIFWSITASLAIRLAPAGKRAQALSLIATGTALAMVLGLPIGRVVGQYFGWRTTFFAIGMGALITLLCLIKLLPKLPSEHSGSLKSLPLLFRRPALMSLYVLTVVVVTAHYTAYSYIEPFVQNVAGLSANFATVLLLILGGAGIIGSLVFGKLGNRHASSLVSIAIALLVVCLLLLLPAADSEAHLAILSIFWGIAIMVIGLGMQVKVLALAPDATDVAMALFSGIFNIGIGAGALVGNQVSLHWSMSAIGYIGAIPACAALVWAVLIFRKWPVTLEEQPH.

Helical transmembrane passes span 15 to 35, 50 to 70, 81 to 101, 103 to 123, 136 to 156, 169 to 189, 209 to 229, 246 to 266, 275 to 295, 301 to 321, 333 to 353, and 364 to 384; these read VVTLAIAAFIFNTTEFVPVGL, VGIMLTIYAWVVAVMSLPFML, LICLFVLFIASHVLSFLAWNF, VLVISRIGIAFAHAIFWSITA, AQALSLIATGTALAMVLGLPI, TFFAIGMGALITLLCLIKLLP, PALMSLYVLTVVVVTAHYTAY, FATVLLLILGGAGIIGSLVFG, SLVSIAIALLVVCLLLLLPAA, LAILSIFWGIAIMVIGLGMQV, VAMALFSGIFNIGIGAGALVG, and AIGYIGAIPACAALVWAVLIF.

The protein belongs to the major facilitator superfamily. SotB (TC 2.A.1.2) family.

It is found in the cell inner membrane. Functionally, involved in the efflux of sugars. The physiological role may be the reduction of the intracellular concentration of toxic sugars or sugar metabolites. The protein is Probable sugar efflux transporter of Salmonella agona (strain SL483).